Consider the following 479-residue polypeptide: Tegument protein VP16 homolog (479 aa).

Belongs to the herpesviridae tegument protein VP16 protein family. Associates with the VP16-induced complex; binding to host HCFC1 activates VP16 for association with the octamer motif-binding host protein POU2F1, to form a multiprotein-DNA complex responsible for activating transcription of the viral immediate early genes.

It is found in the virion tegument. The protein resides in the host nucleus. Its function is as follows. Transcriptional activator of immediate-early (IE) gene products (alpha genes). Acts as a key activator of lytic infection by initiating the lytic program through the assembly of the transcriptional regulatory VP16-induced complex composed of VP16 and two cellular factors, HCFC1 and POU2F1. VP16-induced complex represents a regulatory switch: when it is on, it promotes IE-gene expression and thus lytic infection, and when it is off, it limits IE-gene transcription favoring latent infection. May play a role in the aggregation of tegument proteins around nucleocapsids during virus morphogenesis. The sequence is that of Tegument protein VP16 homolog from Equus caballus (Horse).